Consider the following 465-residue polypeptide: Antithrombin-III (465 aa).

The N-terminal stretch at 1–32 is a signal peptide; sequence MISNGIGTVTAGKRSICLLPLLLIGLWGCVTC. Intrachain disulfides connect Cys-41–Cys-161 and Cys-54–Cys-128. Position 64 is a phosphothreonine (Thr-64). A Phosphoserine modification is found at Ser-69. Trp-82 contacts heparin. An N-linked (GlcNAc...) asparagine glycan is attached at Asn-129. Arg-162 contacts heparin. N-linked (GlcNAc...) asparagine glycosylation is present at Asn-168. A heparin-binding site is contributed by Arg-178. Residues Asn-188 and Asn-225 are each glycosylated (N-linked (GlcNAc...) asparagine). A disulfide bridge links Cys-280 with Cys-463.

Belongs to the serpin family. Forms protease inhibiting heterodimer with TMPRSS7. Phosphorylated by FAM20C in the extracellular medium. As to expression, plasma.

The protein resides in the secreted. The protein localises to the extracellular space. In terms of biological role, most important serine protease inhibitor in plasma that regulates the blood coagulation cascade. AT-III inhibits thrombin, matriptase-3/TMPRSS7, as well as factors IXa, Xa and XIa. Its inhibitory activity is greatly enhanced in the presence of heparin. The sequence is that of Antithrombin-III (SERPINC1) from Bos taurus (Bovine).